Here is a 437-residue protein sequence, read N- to C-terminus: tRNA-2-methylthio-N(6)-dimethylallyladenosine synthase (437 aa).

Positions 1 to 115 (MKVYIETMGC…ISQVIHKEKA (115 aa)) constitute an MTTase N-terminal domain. [4Fe-4S] cluster contacts are provided by Cys10, Cys46, Cys78, Cys148, Cys152, and Cys155. The Radical SAM core domain occupies 134 to 367 (KKAQIRSLLN…QNRHKEILEE (234 aa)). One can recognise a TRAM domain in the interval 370–436 (KLEVGKTHVV…KGRLMATTKG (67 aa)).

It belongs to the methylthiotransferase family. MiaB subfamily. As to quaternary structure, monomer. It depends on [4Fe-4S] cluster as a cofactor.

It is found in the cytoplasm. The catalysed reaction is N(6)-dimethylallyladenosine(37) in tRNA + (sulfur carrier)-SH + AH2 + 2 S-adenosyl-L-methionine = 2-methylsulfanyl-N(6)-dimethylallyladenosine(37) in tRNA + (sulfur carrier)-H + 5'-deoxyadenosine + L-methionine + A + S-adenosyl-L-homocysteine + 2 H(+). Functionally, catalyzes the methylthiolation of N6-(dimethylallyl)adenosine (i(6)A), leading to the formation of 2-methylthio-N6-(dimethylallyl)adenosine (ms(2)i(6)A) at position 37 in tRNAs that read codons beginning with uridine. The sequence is that of tRNA-2-methylthio-N(6)-dimethylallyladenosine synthase from Helicobacter pylori (strain G27).